Here is an 88-residue protein sequence, read N- to C-terminus: Small ribosomal subunit protein uS17 (88 aa).

It belongs to the universal ribosomal protein uS17 family. In terms of assembly, part of the 30S ribosomal subunit.

Its function is as follows. One of the primary rRNA binding proteins, it binds specifically to the 5'-end of 16S ribosomal RNA. The sequence is that of Small ribosomal subunit protein uS17 from Prochlorococcus marinus (strain MIT 9301).